The primary structure comprises 527 residues: Amine oxidase [flavin-containing] A (527 aa).

N-acetylmethionine is present on Met-1. Over 1-497 the chain is Cytoplasmic; it reads MENQEKASIA…HTFWERNLPS (497 aa). Position 383 is a phosphoserine (Ser-383). Position 406 is an S-8alpha-FAD cysteine (Cys-406). A helical; Anchor for type IV membrane protein transmembrane segment spans residues 498–518; it reads VSGLLKIIGFSTSVTALGFVL. The Mitochondrial intermembrane segment spans residues 519–527; sequence YKYKLLPRS. An interaction with membrane phospholipid headgroups region spans residues 520-522; the sequence is KYK.

It belongs to the flavin monoamine oxidase family. Monomer, homo- or heterodimer (containing two subunits of similar size). Each subunit contains a covalently bound flavin. Enzymatically active as monomer. FAD serves as cofactor.

The protein localises to the mitochondrion outer membrane. It carries out the reaction a secondary aliphatic amine + O2 + H2O = a primary amine + an aldehyde + H2O2. The enzyme catalyses a primary methyl amine + O2 + H2O = an aldehyde + H2O2 + NH4(+). The catalysed reaction is (R)-adrenaline + O2 + H2O = (R)-3,4-dihydroxymandelaldehyde + methylamine + H2O2. It catalyses the reaction dopamine + O2 + H2O = 3,4-dihydroxyphenylacetaldehyde + H2O2 + NH4(+). It carries out the reaction tyramine + O2 + H2O = (4-hydroxyphenyl)acetaldehyde + H2O2 + NH4(+). The enzyme catalyses (R)-noradrenaline + O2 + H2O = (R)-3,4-dihydroxymandelaldehyde + H2O2 + NH4(+). The catalysed reaction is serotonin + O2 + H2O = (5-hydroxyindol-3-yl)acetaldehyde + H2O2 + NH4(+). It catalyses the reaction kynuramine + O2 + H2O = 3-(2-aminophenyl)-3-oxopropanal + H2O2 + NH4(+). It carries out the reaction tryptamine + O2 + H2O = indole-3-acetaldehyde + H2O2 + NH4(+). The enzyme catalyses 2-phenylethylamine + O2 + H2O = 2-phenylacetaldehyde + H2O2 + NH4(+). Functionally, catalyzes the oxidative deamination of primary and some secondary amine such as neurotransmitters, with concomitant reduction of oxygen to hydrogen peroxide and has important functions in the metabolism of neuroactive and vasoactive amines in the central nervous system and peripheral tissues. Preferentially oxidizes serotonin. Also catalyzes the oxidative deamination of kynuramine to 3-(2-aminophenyl)-3-oxopropanal that can spontaneously condense to 4-hydroxyquinoline. This is Amine oxidase [flavin-containing] A from Pongo abelii (Sumatran orangutan).